A 609-amino-acid chain; its full sequence is Frizzled and smoothened-like protein E (609 aa).

The signal sequence occupies residues methionine 1–glycine 20. Topologically, residues glutamate 21 to lysine 259 are extracellular. The FZ domain maps to phenylalanine 35–proline 192. 4 cysteine pairs are disulfide-bonded: cysteine 40/cysteine 118, cysteine 53/cysteine 111, cysteine 100/cysteine 149, and cysteine 138/cysteine 189. N-linked (GlcNAc...) asparagine glycosylation is found at asparagine 75, asparagine 130, asparagine 172, asparagine 198, asparagine 217, and asparagine 245. A helical membrane pass occupies residues threonine 260–asparagine 280. Residues arginine 281 to asparagine 288 lie on the Cytoplasmic side of the membrane. Residues isoleucine 289 to phenylalanine 309 traverse the membrane as a helical segment. Over glycine 310–alanine 337 the chain is Extracellular. The helical transmembrane segment at methionine 338–phenylalanine 358 threads the bilayer. Residues cysteine 359–lysine 365 lie on the Cytoplasmic side of the membrane. Residues leucine 366 to isoleucine 386 form a helical membrane-spanning segment. At leucine 387 to tryptophan 408 the chain is on the extracellular side. Residues phenylalanine 409 to isoleucine 429 form a helical membrane-spanning segment. The Cytoplasmic portion of the chain corresponds to glycine 430–proline 457. Residues phenylalanine 458–valine 478 traverse the membrane as a helical segment. Residues glutamate 479 to asparagine 511 are Extracellular-facing. Residues tyrosine 512–isoleucine 532 traverse the membrane as a helical segment. Topologically, residues tyrosine 533 to lysine 609 are cytoplasmic. Positions glutamate 559–aspartate 570 are enriched in polar residues. The tract at residues glutamate 559 to lysine 609 is disordered. Residues lysine 575–aspartate 598 show a composition bias toward low complexity. Residues asparagine 599–lysine 609 are compositionally biased toward basic and acidic residues.

Belongs to the G-protein coupled receptor Fz/Smo family.

The protein resides in the membrane. This chain is Frizzled and smoothened-like protein E (fslE), found in Dictyostelium discoideum (Social amoeba).